The primary structure comprises 1795 residues: Putative surface cell antigen sca2 (1795 aa).

The first 33 residues, 1–33 (MNLQNSHSKKYVLTFFMSTCLLTSSFLSTSARA), serve as a signal peptide directing secretion. Over residues 360-373 (FLNNNDTTKPSTGR) the composition is skewed to polar residues. Disordered regions lie at residues 360–391 (FLNN…SNQS), 664–709 (LEQT…SSNS), and 1354–1441 (KQEN…DEEL). Residues 672–700 (PNPPPLPLNGGIPNPPPLPLNGSMPPPPL) show a composition bias toward pro residues. Basic and acidic residues-rich tracts occupy residues 1364 to 1383 (SSTK…EQSD) and 1398 to 1409 (SKNDKSSDDKKS). The segment covering 1417 to 1432 (DEDDTGYATDEEELEE) has biased composition (acidic residues). Residues 1516–1795 (ETSINRGVWI…QGLIKLKVNL (280 aa)) form the Autotransporter domain.

Its subcellular location is the cell outer membrane. The polypeptide is Putative surface cell antigen sca2 (sca2) (Rickettsia conorii (strain ATCC VR-613 / Malish 7)).